The chain runs to 132 residues: Large ribosomal subunit protein uL14 (132 aa).

Belongs to the universal ribosomal protein uL14 family. As to quaternary structure, part of the 50S ribosomal subunit. Forms a cluster with proteins L3 and L24e, part of which may contact the 16S rRNA in 2 intersubunit bridges.

In terms of biological role, binds to 23S rRNA. Forms part of two intersubunit bridges in the 70S ribosome. This is Large ribosomal subunit protein uL14 from Methanosarcina barkeri (strain Fusaro / DSM 804).